Here is a 454-residue protein sequence, read N- to C-terminus: Chromosomal replication initiator protein DnaA (454 aa).

The segment at 1–81 is domain I, interacts with DnaA modulators; it reads MNNSLWQQCA…PNVVLKVGEA (81 aa). A disordered region spans residues 79–110; the sequence is GEASPTQRDSGSPQRAAATRRKTPNFSSGNTD. Positions 81–117 are domain II; sequence ASPTQRDSGSPQRAAATRRKTPNFSSGNTDVEVPFES. Polar residues predominate over residues 82–91; that stretch reads SPTQRDSGSP. A domain III, AAA+ region region spans residues 118–334; that stretch reads NIHPEYTFDN…GALNRVVANV (217 aa). 4 residues coordinate ATP: glycine 162, glycine 164, lysine 165, and threonine 166. The domain IV, binds dsDNA stretch occupies residues 335–454; sequence QLTGRPITID…YRNLIRTLSS (120 aa).

Belongs to the DnaA family. As to quaternary structure, oligomerizes as a right-handed, spiral filament on DNA at oriC.

It is found in the cytoplasm. Functionally, plays an essential role in the initiation and regulation of chromosomal replication. ATP-DnaA binds to the origin of replication (oriC) to initiate formation of the DNA replication initiation complex once per cell cycle. Binds the DnaA box (a 9 base pair repeat at the origin) and separates the double-stranded (ds)DNA. Forms a right-handed helical filament on oriC DNA; dsDNA binds to the exterior of the filament while single-stranded (ss)DNA is stabiized in the filament's interior. The ATP-DnaA-oriC complex binds and stabilizes one strand of the AT-rich DNA unwinding element (DUE), permitting loading of DNA polymerase. After initiation quickly degrades to an ADP-DnaA complex that is not apt for DNA replication. Binds acidic phospholipids. The polypeptide is Chromosomal replication initiator protein DnaA (Idiomarina loihiensis (strain ATCC BAA-735 / DSM 15497 / L2-TR)).